The sequence spans 394 residues: Elongation factor Tu (394 aa).

In terms of domain architecture, tr-type G spans 10–204 (KPHVNIGTIG…AVDSYIPQPV (195 aa)). The interval 19–26 (GHVDHGKT) is G1. 19–26 (GHVDHGKT) provides a ligand contact to GTP. Residue threonine 26 participates in Mg(2+) binding. Positions 60–64 (GITIS) are G2. Residues 81-84 (DCPG) are G3. GTP-binding positions include 81-85 (DCPGH) and 136-139 (NKID). The G4 stretch occupies residues 136 to 139 (NKID). The interval 174–176 (SAL) is G5.

The protein belongs to the TRAFAC class translation factor GTPase superfamily. Classic translation factor GTPase family. EF-Tu/EF-1A subfamily. In terms of assembly, monomer.

The protein localises to the cytoplasm. It catalyses the reaction GTP + H2O = GDP + phosphate + H(+). In terms of biological role, GTP hydrolase that promotes the GTP-dependent binding of aminoacyl-tRNA to the A-site of ribosomes during protein biosynthesis. This Rickettsia rickettsii protein is Elongation factor Tu.